Consider the following 260-residue polypeptide: Acetylglutamate kinase (260 aa).

Substrate contacts are provided by residues 46–47 (GG), Arg-68, and Asn-160.

This sequence belongs to the acetylglutamate kinase family. ArgB subfamily.

The protein localises to the cytoplasm. The enzyme catalyses N-acetyl-L-glutamate + ATP = N-acetyl-L-glutamyl 5-phosphate + ADP. It participates in amino-acid biosynthesis; L-arginine biosynthesis; N(2)-acetyl-L-ornithine from L-glutamate: step 2/4. In terms of biological role, catalyzes the ATP-dependent phosphorylation of N-acetyl-L-glutamate. The polypeptide is Acetylglutamate kinase (Shewanella denitrificans (strain OS217 / ATCC BAA-1090 / DSM 15013)).